The following is a 608-amino-acid chain: UvrABC system protein C (608 aa).

The GIY-YIG domain occupies histidine 13–valine 91. Residues glutamine 201–valine 236 enclose the UVR domain.

This sequence belongs to the UvrC family. In terms of assembly, interacts with UvrB in an incision complex.

The protein localises to the cytoplasm. The UvrABC repair system catalyzes the recognition and processing of DNA lesions. UvrC both incises the 5' and 3' sides of the lesion. The N-terminal half is responsible for the 3' incision and the C-terminal half is responsible for the 5' incision. In Pasteurella multocida (strain Pm70), this protein is UvrABC system protein C.